The following is a 206-amino-acid chain: Octanoyltransferase (206 aa).

In terms of domain architecture, BPL/LPL catalytic spans 30–206 (PETNDEIWLV…EFVTLLNNSI (177 aa)). Substrate is bound by residues 69–76 (RGGQVTYH), 137–139 (SLG), and 150–152 (GIA). C168 acts as the Acyl-thioester intermediate in catalysis.

It belongs to the LipB family.

The protein localises to the cytoplasm. The catalysed reaction is octanoyl-[ACP] + L-lysyl-[protein] = N(6)-octanoyl-L-lysyl-[protein] + holo-[ACP] + H(+). It participates in protein modification; protein lipoylation via endogenous pathway; protein N(6)-(lipoyl)lysine from octanoyl-[acyl-carrier-protein]: step 1/2. Catalyzes the transfer of endogenously produced octanoic acid from octanoyl-acyl-carrier-protein onto the lipoyl domains of lipoate-dependent enzymes. Lipoyl-ACP can also act as a substrate although octanoyl-ACP is likely to be the physiological substrate. This chain is Octanoyltransferase, found in Francisella tularensis subsp. mediasiatica (strain FSC147).